An 88-amino-acid chain; its full sequence is Homeobox protein knotted-1-like 1 (88 aa).

Residues Glu-4–Ile-24 form the ELK domain. The segment at residues Leu-25–Asn-88 is a DNA-binding region (homeobox; TALE-type).

It belongs to the TALE/KNOX homeobox family. As to expression, highly expressed in the roots.

It is found in the nucleus. In Zea mays (Maize), this protein is Homeobox protein knotted-1-like 1 (KNOX1).